We begin with the raw amino-acid sequence, 178 residues long: Alkyl hydroperoxide reductase AhpD (178 aa).

Cys-130 acts as the Proton donor in catalysis. Cys-130 and Cys-133 are oxidised to a cystine. Catalysis depends on Cys-133, which acts as the Cysteine sulfenic acid (-SOH) intermediate.

The protein belongs to the AhpD family. As to quaternary structure, homotrimer.

The enzyme catalyses N(6)-[(R)-dihydrolipoyl]-L-lysyl-[lipoyl-carrier protein] + a hydroperoxide = N(6)-[(R)-lipoyl]-L-lysyl-[lipoyl-carrier protein] + an alcohol + H2O. Functionally, antioxidant protein with alkyl hydroperoxidase activity. Required for the reduction of the AhpC active site cysteine residues and for the regeneration of the AhpC enzyme activity. This Mycolicibacterium paratuberculosis (strain ATCC BAA-968 / K-10) (Mycobacterium paratuberculosis) protein is Alkyl hydroperoxide reductase AhpD.